We begin with the raw amino-acid sequence, 342 residues long: tRNA dimethylallyltransferase (342 aa).

Position 39-46 (39-46) interacts with ATP; sequence GPTGSGKT. Substrate is bound at residue 41-46; it reads TGSGKT. The segment at 64–67 is interaction with substrate tRNA; sequence DSMQ.

The protein belongs to the IPP transferase family. Monomer. The cofactor is Mg(2+).

It catalyses the reaction adenosine(37) in tRNA + dimethylallyl diphosphate = N(6)-dimethylallyladenosine(37) in tRNA + diphosphate. In terms of biological role, catalyzes the transfer of a dimethylallyl group onto the adenine at position 37 in tRNAs that read codons beginning with uridine, leading to the formation of N6-(dimethylallyl)adenosine (i(6)A). The polypeptide is tRNA dimethylallyltransferase (Chlamydia felis (strain Fe/C-56) (Chlamydophila felis)).